The sequence spans 170 residues: NADH-ubiquinone oxidoreductase chain 6 (170 aa).

5 helical membrane passes run 1 to 21 (MIYM…AVAS), 26 to 46 (FYAA…IVSF), 49 to 69 (SFLS…VFAY), 86 to 106 (VVFY…FLGG), and 138 to 158 (WVII…GIWV).

This sequence belongs to the complex I subunit 6 family. In terms of assembly, core subunit of respiratory chain NADH dehydrogenase (Complex I) which is composed of 45 different subunits.

It localises to the mitochondrion inner membrane. It carries out the reaction a ubiquinone + NADH + 5 H(+)(in) = a ubiquinol + NAD(+) + 4 H(+)(out). In terms of biological role, core subunit of the mitochondrial membrane respiratory chain NADH dehydrogenase (Complex I) which catalyzes electron transfer from NADH through the respiratory chain, using ubiquinone as an electron acceptor. Essential for the catalytic activity and assembly of complex I. The sequence is that of NADH-ubiquinone oxidoreductase chain 6 (mt-nd6) from Xenopus laevis (African clawed frog).